Reading from the N-terminus, the 144-residue chain is Large ribosomal subunit protein uL15 (144 aa).

The tract at residues M1–E52 is disordered. Gly residues predominate over residues R22–S32.

This sequence belongs to the universal ribosomal protein uL15 family. In terms of assembly, part of the 50S ribosomal subunit.

Its function is as follows. Binds to the 23S rRNA. This is Large ribosomal subunit protein uL15 from Chlamydia felis (strain Fe/C-56) (Chlamydophila felis).